We begin with the raw amino-acid sequence, 416 residues long: Probable tRNA pseudouridine synthase D (416 aa).

Asp-83 functions as the Nucleophile in the catalytic mechanism. In terms of domain architecture, TRUD spans Gly-158–Arg-379.

This sequence belongs to the pseudouridine synthase TruD family.

The catalysed reaction is uridine(13) in tRNA = pseudouridine(13) in tRNA. Could be responsible for synthesis of pseudouridine from uracil-13 in transfer RNAs. In Thermococcus onnurineus (strain NA1), this protein is Probable tRNA pseudouridine synthase D.